A 189-amino-acid polypeptide reads, in one-letter code: Isopentenyl-diphosphate Delta-isomerase (189 aa).

Positions 27 and 34 each coordinate Mn(2+). In terms of domain architecture, Nudix hydrolase spans proline 32 to aspartate 171. Residue cysteine 69 is part of the active site. A Mn(2+)-binding site is contributed by histidine 71. Residue glutamate 89 participates in Mg(2+) binding. Positions 119 and 121 each coordinate Mn(2+). Residue glutamate 121 is part of the active site.

The protein belongs to the IPP isomerase type 1 family. Mg(2+) serves as cofactor. The cofactor is Mn(2+).

Its subcellular location is the cytoplasm. The enzyme catalyses isopentenyl diphosphate = dimethylallyl diphosphate. It participates in isoprenoid biosynthesis; dimethylallyl diphosphate biosynthesis; dimethylallyl diphosphate from isopentenyl diphosphate: step 1/1. Its function is as follows. Catalyzes the 1,3-allylic rearrangement of the homoallylic substrate isopentenyl (IPP) to its highly electrophilic allylic isomer, dimethylallyl diphosphate (DMAPP). The sequence is that of Isopentenyl-diphosphate Delta-isomerase from Corynebacterium glutamicum (strain R).